A 217-amino-acid polypeptide reads, in one-letter code: Thymidylate kinase (217 aa).

Residue 16-23 (GIDGAGKT) coordinates ATP.

The protein belongs to the thymidylate kinase family.

It carries out the reaction dTMP + ATP = dTDP + ADP. In terms of biological role, phosphorylation of dTMP to form dTDP in both de novo and salvage pathways of dTTP synthesis. This is Thymidylate kinase from Xylella fastidiosa (strain M23).